Here is a 512-residue protein sequence, read N- to C-terminus: MMNAAFQQTATDSKTGDAPAILEMRGISQIFPGVKALDNVSIALHPGTVTALIGENGAGKSTLVKILTGIYRPNEGEILVDGQPVTFASAQAAIDAGVTAIHQETVLFDELTVAENIFLGHAPRTRLRTIDWQAMNSRAKALLTALESNIDPTIRLKDFSIAQRHLVAIARALSIEARIVIMDEPTAALSRKEIDDLFRIVRGLKEKGKAILFISHKFDEVYEIADDFVVFRDGRAVGQGRLKETPQDEIVRMMVGRDVENAFPKVDVAFGGPVLEIRNYSHRTEFRDISFTLRQGEILGIYGLIGAGRSELSQSLFGITRPLSGKMMLEGREITIHSPQDAIRAGIVYVPEERGRHGLALPMPIFQNMTLPSLTRTSRRGFLRAAEEFALARKYAERLDLRAAALSVPVGTLSGGNQQKVVIGKWLATAPKVIILDEPTKGIDIGSKAAVHGFISELAAEGLSIIMVSSELPEIIGMSDRVLVMKEGLAAGIFERAELSPEALVRAATGNA.

ABC transporter domains are found at residues 22 to 258 (LEMR…VGRD) and 263 to 512 (FPKV…TGNA). ATP is bound at residue 54–61 (GENGAGKS).

It belongs to the ABC transporter superfamily. Ribose importer (TC 3.A.1.2.1) family. The complex is composed of an ATP-binding protein (RbsA), two transmembrane proteins (RbsC) and a solute-binding protein (RbsB).

It is found in the cell inner membrane. The catalysed reaction is D-ribose(out) + ATP + H2O = D-ribose(in) + ADP + phosphate + H(+). Functionally, part of the ABC transporter complex RbsABC involved in ribose import. Responsible for energy coupling to the transport system. The sequence is that of Ribose import ATP-binding protein RbsA 2 from Rhizobium johnstonii (strain DSM 114642 / LMG 32736 / 3841) (Rhizobium leguminosarum bv. viciae).